The chain runs to 369 residues: Phenylalanine--tRNA ligase alpha subunit (369 aa).

A Mg(2+)-binding site is contributed by E269.

Belongs to the class-II aminoacyl-tRNA synthetase family. Phe-tRNA synthetase alpha subunit type 1 subfamily. Tetramer of two alpha and two beta subunits. Mg(2+) is required as a cofactor.

Its subcellular location is the cytoplasm. It carries out the reaction tRNA(Phe) + L-phenylalanine + ATP = L-phenylalanyl-tRNA(Phe) + AMP + diphosphate + H(+). The protein is Phenylalanine--tRNA ligase alpha subunit of Nitrobacter winogradskyi (strain ATCC 25391 / DSM 10237 / CIP 104748 / NCIMB 11846 / Nb-255).